The primary structure comprises 311 residues: tRNA-cytidine(32) 2-sulfurtransferase (311 aa).

The PP-loop motif motif lies at S47–S52. Residues C122, C125, and C213 each contribute to the [4Fe-4S] cluster site.

It belongs to the TtcA family. As to quaternary structure, homodimer. Mg(2+) is required as a cofactor. Requires [4Fe-4S] cluster as cofactor.

The protein resides in the cytoplasm. The enzyme catalyses cytidine(32) in tRNA + S-sulfanyl-L-cysteinyl-[cysteine desulfurase] + AH2 + ATP = 2-thiocytidine(32) in tRNA + L-cysteinyl-[cysteine desulfurase] + A + AMP + diphosphate + H(+). It functions in the pathway tRNA modification. Functionally, catalyzes the ATP-dependent 2-thiolation of cytidine in position 32 of tRNA, to form 2-thiocytidine (s(2)C32). The sulfur atoms are provided by the cysteine/cysteine desulfurase (IscS) system. The polypeptide is tRNA-cytidine(32) 2-sulfurtransferase (Shigella dysenteriae serotype 1 (strain Sd197)).